Here is a 619-residue protein sequence, read N- to C-terminus: MALLQIAEPGQSSAPHQHRIAIGIDLGTTHSLVATVLSGKPKVLNDVQNRRLLPSIVHYGDNTTHYGEEAKPFIIADPKNTIVSVKRFMGRSKADIKFQHPYELVGSENEMPAFETRAGRKTPVEISAEILKQLKARAEDSLQNPVNGAVITVPAYFDEAQRQATRDAAQLAGLNVLRLLNEPTAAAVAYGLDQESNLATDRNYVIYDLGGGTFDVSILRFSQGVFEVLATGGHTALGGDDLDRLIVKWAKKQLNIDVLSDEDYAVFIVAARQAKEQLSTQDSVELKLLEATLTLDRPTFESIIQVALDKTISVCKRVLRDAKLELTDIQNVVLVGGSTRSYAVQKAVREVFAQEPLCTINPDEVVAIGASITANQLIGNSQDGSLLLDVTPLSLGLETMGGLVERLISRNTAIPVARRQEFTTYQDGQTAMLIHVVQGERDLVEHCRSLGRFVLHGIPPMTAGQARIEVTFQVDADGLLTVSAREATSGVQAHIDIKPSYGLSEADTERLLIEGFQHAEEDKNLRHLKETKVEAERELEALEQALKVDADLLDEKQLEALNSAKGSLKAQLEGSDIQAIEQAVQQLKVHSDAFAALRMNRHIDHALKGTKLDDWSKSN.

It belongs to the heat shock protein 70 family.

Its function is as follows. Chaperone involved in the maturation of iron-sulfur cluster-containing proteins. Has a low intrinsic ATPase activity which is markedly stimulated by HscB. This Acinetobacter baumannii (strain ATCC 17978 / DSM 105126 / CIP 53.77 / LMG 1025 / NCDC KC755 / 5377) protein is Chaperone protein HscA homolog.